Reading from the N-terminus, the 1109-residue chain is Coiled-coil domain-containing protein 158 (1109 aa).

Residues 1–12 (MESKACESKNED) are compositionally biased toward basic and acidic residues. The tract at residues 1–31 (MESKACESKNEDLLPSGITSKGGSSSPFFVT) is disordered. Polar residues predominate over residues 17-31 (GITSKGGSSSPFFVT). Coiled-coil stretches lie at residues 71 to 166 (GKEH…MLKD) and 242 to 828 (VEDQ…QEQE). 2 disordered regions span residues 843-897 (LQGP…DPTR) and 952-1061 (HRSN…TGKT). Polar residues-rich tracts occupy residues 862 to 882 (ASVT…SFLS), 953 to 970 (RSNN…SSET), and 988 to 998 (SCFTFTSTASP). A compositionally biased stretch (low complexity) spans 999 to 1019 (SGKMSASRSFSSSPKKSPVHS). 2 stretches are compositionally biased toward polar residues: residues 1020–1037 (LLTS…QYRS) and 1043–1061 (SPTS…TGKT). Residues 1053-1109 (PSLETTGKTCQKLQNRLESLQTLVEDLQLKNQAMSSMIRNQEKRIQKVKDQEKMLLK) adopt a coiled-coil conformation.

The protein is Coiled-coil domain-containing protein 158 (Ccdc158) of Mus musculus (Mouse).